The primary structure comprises 162 residues: uncharacterized protein (162 aa).

The next 4 helical transmembrane spans lie at 10-30 (ILSFTYLALVLCLVMPFMLIL), 50-70 (IVELIVLSIFAGFITSFALYN), 96-116 (IAQYEVMVSIFYSLLLLIILL), and 125-145 (FTAIFQIFFTFCAIFVPLFIF).

It localises to the cell membrane. This is an uncharacterized protein from Methanocaldococcus jannaschii (strain ATCC 43067 / DSM 2661 / JAL-1 / JCM 10045 / NBRC 100440) (Methanococcus jannaschii).